A 235-amino-acid polypeptide reads, in one-letter code: Rab-like protein 3 (235 aa).

A small GTPase-like region spans residues 1-235 (MASLDRVKVL…GGNFKSLHYD (235 aa)). GTP is bound by residues 16 to 21 (GVGKSS), 148 to 150 (KLD), and 179 to 180 (DC).

Belongs to the small GTPase superfamily. Rab family. In terms of assembly, homodimer.

In terms of biological role, required for KRAS signaling regulation and modulation of cell proliferation. Regulator of KRAS prenylation, and probably prenylation of other small GTPases. Required for lymphocyte development and function. Not required for myeloid cell development. The polypeptide is Rab-like protein 3 (rabl3) (Xenopus laevis (African clawed frog)).